The chain runs to 916 residues: Protein translocase subunit SecA (916 aa).

Residues Gln87, 105-109 (GEGKT), and Asp507 each bind ATP. The Zn(2+) site is built by Cys900, Cys902, Cys911, and His912.

The protein belongs to the SecA family. Monomer and homodimer. Part of the essential Sec protein translocation apparatus which comprises SecA, SecYEG and auxiliary proteins SecDF-YajC and YidC. The cofactor is Zn(2+).

Its subcellular location is the cell inner membrane. It localises to the cytoplasm. The catalysed reaction is ATP + H2O + cellular proteinSide 1 = ADP + phosphate + cellular proteinSide 2.. Functionally, part of the Sec protein translocase complex. Interacts with the SecYEG preprotein conducting channel. Has a central role in coupling the hydrolysis of ATP to the transfer of proteins into and across the cell membrane, serving both as a receptor for the preprotein-SecB complex and as an ATP-driven molecular motor driving the stepwise translocation of polypeptide chains across the membrane. This is Protein translocase subunit SecA from Neisseria gonorrhoeae (strain NCCP11945).